The following is a 372-amino-acid chain: Chloroplast protein FOR GROWTH AND FERTILITY 2 (372 aa).

Residues 1-20 are disordered; that stretch reads MDRLLQPPSSHSIAPSKFQS. A chloroplast-targeting transit peptide spans 1-78; that stretch reads MDRLLQPPSS…NQSSNFLIAS (78 aa). Positions 7-20 are enriched in polar residues; sequence PPSSHSIAPSKFQS. A run of 7 helical transmembrane segments spans residues 109-129, 161-181, 195-215, 231-251, 281-301, 309-329, and 352-372; these read VILV…PPAF, FFAG…LAPL, ALWG…FLLL, VVGL…SEMP, GIVH…LALP, FLIM…VFIG, and LVAI…FSLY.

As to expression, mostly expressed in leaves, stems and flowers, to a lower extent, in roots, floral bud, inflorescence and siliques, and, barely, in seedlings.

The protein resides in the plastid. It localises to the chloroplast membrane. Its subcellular location is the plastid membrane. Together with CGF1, essential protein which supports female gametogenesis and embryogenesis, probably by securing local energy supply. The sequence is that of Chloroplast protein FOR GROWTH AND FERTILITY 2 from Arabidopsis thaliana (Mouse-ear cress).